A 511-amino-acid polypeptide reads, in one-letter code: MKFFLLLFTIGFCWAQYSPNTQQGRTSIVHLFEWRWVDIALECERYLAPKGFGGVQVSPPNENVAIYNPFRPWWERYQPVSYKLCTRSGNEDEFRNMVTRCNNVGVRIYVDAVINHMCGNAVSAGTSSTCGSYFNPGSRDFPAVPYSGWDFNDGKCKTGSGDIENYNDATQVRDCRLTGLLDLALEKDYVRSKIAEYMNHLIDIGVAGFRLDASKHMWPGDIKAILDKLHNLNSNWFPAGSKPFIYQEVIDLGGEPIKSSDYFGNGRVTEFKYGAKLGTVIRKWNGEKMSYLKNWGEGWGFVPSDRALVFVDNHDNQRGHGAGGASILTFWDARLYKMAVGFMLAHPYGFTRVMSSYRWPRQFQNGNDVNDWVGPPNNNGVIKEVTINPDTTCGNDWVCEHRWRQIRNMVIFRNVVDGQPFTNWYDNGSNQVAFGRGNRGFIVFNNDDWSFSLTLQTGLPAGTYCDVISGDKINGNCTGIKIYVSDDGKAHFSISNSAEDPFIAIHAESKL.

The signal sequence occupies residues 1–15 (MKFFLLLFTIGFCWA). Q16 carries the pyrrolidone carboxylic acid modification. Cystine bridges form between C43-C101, C85-C130, and C156-C175. 3 residues coordinate Ca(2+): N115, R173, and D182. R210 is a chloride binding site. Residue D212 is the Nucleophile of the active site. H216 contacts Ca(2+). Catalysis depends on E248, which acts as the Proton donor. Chloride-binding residues include N313 and R352. Intrachain disulfides connect C393-C399 and C465-C477. A glycan (N-linked (GlcNAc...) asparagine) is linked at N476.

Belongs to the glycosyl hydrolase 13 family. As to quaternary structure, monomer. Binds to the sea anemone inhibitor helianthamide. Ca(2+) is required as a cofactor. It depends on chloride as a cofactor. As to expression, detected in pancreas (at protein level).

It localises to the secreted. Its subcellular location is the extracellular space. The enzyme catalyses Endohydrolysis of (1-&gt;4)-alpha-D-glucosidic linkages in polysaccharides containing three or more (1-&gt;4)-alpha-linked D-glucose units.. The sequence is that of Pancreatic alpha-amylase (AMY2A) from Homo sapiens (Human).